Reading from the N-terminus, the 422-residue chain is F-box/WD repeat-containing protein 2 (422 aa).

Residues 54-101 (RDFLKLLPLELSFYLLKWLDPQTLLTCCLVSKQWNKVISACTEVWQTA) enclose the F-box domain. WD repeat units follow at residues 146-183 (GHSA…CVYG), 185-221 (QTHT…RTQH), 224-265 (GHTG…NTLT), and 276-314 (LQKC…NCKC). Lysine 298 is subject to N6-acetyllysine.

Directly interacts with SKP1 and CUL1. As to expression, widely expressed during embryogenesis and in adult tissues.

Substrate-recognition component of the SCF (SKP1-CUL1-F-box protein)-type E3 ubiquitin ligase complex. This Mus musculus (Mouse) protein is F-box/WD repeat-containing protein 2 (Fbxw2).